The sequence spans 427 residues: Serine--tRNA ligase (427 aa).

233 to 235 is an L-serine binding site; sequence TAE. Residue 264-266 coordinates ATP; the sequence is RSE. An L-serine-binding site is contributed by Glu-287. Position 351–354 (351–354) interacts with ATP; the sequence is EISS. Ser-387 provides a ligand contact to L-serine.

The protein belongs to the class-II aminoacyl-tRNA synthetase family. Type-1 seryl-tRNA synthetase subfamily. Homodimer. The tRNA molecule binds across the dimer.

The protein resides in the cytoplasm. It catalyses the reaction tRNA(Ser) + L-serine + ATP = L-seryl-tRNA(Ser) + AMP + diphosphate + H(+). The catalysed reaction is tRNA(Sec) + L-serine + ATP = L-seryl-tRNA(Sec) + AMP + diphosphate + H(+). Its pathway is aminoacyl-tRNA biosynthesis; selenocysteinyl-tRNA(Sec) biosynthesis; L-seryl-tRNA(Sec) from L-serine and tRNA(Sec): step 1/1. Catalyzes the attachment of serine to tRNA(Ser). Is also able to aminoacylate tRNA(Sec) with serine, to form the misacylated tRNA L-seryl-tRNA(Sec), which will be further converted into selenocysteinyl-tRNA(Sec). This is Serine--tRNA ligase from Buchnera aphidicola subsp. Schizaphis graminum (strain Sg).